We begin with the raw amino-acid sequence, 233 residues long: Thrombin-like enzyme elegaxobin-2 (233 aa).

The 224-residue stretch at 1-224 (VIGGDECNIN…HLDWIKGIIA (224 aa)) folds into the Peptidase S1 domain. 6 disulfide bridges follow: Cys7-Cys138, Cys25-Cys41, Cys73-Cys231, Cys117-Cys185, Cys149-Cys164, and Cys175-Cys200. His40 functions as the Charge relay system in the catalytic mechanism. An N-linked (GlcNAc...) asparagine glycan is attached at Asn78. Catalysis depends on Asp85, which acts as the Charge relay system. Catalysis depends on Ser179, which acts as the Charge relay system.

This sequence belongs to the peptidase S1 family. Snake venom subfamily. Monomer. As to expression, expressed by the venom gland.

Its subcellular location is the secreted. In terms of biological role, thrombin-like snake venom serine protease that clots rabbit fibrinogen. Only the beta chain of fibrinogen (FGB) is cleaved, releasing fibrinopeptide B. Human and bovine fibrinogen are unaffected. Also cleaves Met-Lys and Arg-Ser bonds in heat-denatured bovine plasma kininogen to release Lys-bradykinin. The sequence is that of Thrombin-like enzyme elegaxobin-2 from Protobothrops elegans (Elegant pitviper).